A 443-amino-acid polypeptide reads, in one-letter code: Endonuclease CUE2 (443 aa).

2 CUE domains span residues 8–51 (DHES…KEND) and 55–98 (TVDN…NYET). In terms of domain architecture, Smr spans 347–443 (LDFHGFLPSE…YFRIEGKKKK (97 aa)).

MRNA endonuclease involved in the No-Go Decay (NGD) pathway, which catalyzes mRNA cleavage and degradation in response to ribosome collisions. Acts downstream of the ribosome collision sensor HEL2. Specifically recognizes and binds RPS7/eS7 polyubiquitinated by MOT2/NOT4 and HEL2, promoting CUE2 recruitment to stalled ribosomes, where it mediates mRNA cleavage upstream of the colliding ribosome. Also mediates mRNA cleavage within colliding ribosomes: recruited to colliding ribosomes downstream of the RQT (ribosome quality control trigger) complex following disassembly of stalled ribosomes and cleaves mRNAs partially released from the colliding ribosome. In Saccharomyces cerevisiae (strain ATCC 204508 / S288c) (Baker's yeast), this protein is Endonuclease CUE2.